Here is a 534-residue protein sequence, read N- to C-terminus: uncharacterized protein (534 aa).

A run of 5 helical transmembrane segments spans residues I4–F22, G24–I46, A56–A75, A82–G104, and P134–V156. The disordered stretch occupies residues G167–A187. A compositionally biased stretch (polar residues) spans T172–A187. RCK C-terminal domains follow at residues G180–E264 and L265–H349. The next 6 helical transmembrane spans lie at L359–Q378, F382–H401, I408–A430, M445–F467, W479–A501, and Y511–I533.

Belongs to the AAE transporter (TC 2.A.81) family.

Its subcellular location is the cell membrane. This is an uncharacterized protein from Rhodopirellula baltica (strain DSM 10527 / NCIMB 13988 / SH1).